The sequence spans 272 residues: WIMGHMVNNIKQIDEFVNLGSNAIETDVSFDKKANPEYTYHGTPCDCGRDCLRWEYFNDFVKALRTATTPGNSKYDKLFLVVFDLKTSSLYDYRASEAGTKLAKNLLQHYWNNGNNGGRAYIILSIPNLKHYKLITGFQQTLKDEGHAELLDKVGYDFSGNDDIGDVQKTYEKAGVTGHVWQSDGITNCLLRGFTRINAAVANRDSANGIINKVYYWTVDKRQATRDTLDANVDGIMTNYPDITVEILNEDAYKTKFRIATYEDNPWETFKE.

Residue H5 is part of the active site. Positions 25 and 27 each coordinate Mg(2+). H41 functions as the Nucleophile in the catalytic mechanism. Intrachain disulfides connect C45/C51 and C47/C189. D84 serves as a coordination point for Mg(2+).

It belongs to the arthropod phospholipase D family. Class II subfamily. Mg(2+) serves as cofactor. As to expression, expressed by the venom gland.

It localises to the secreted. The enzyme catalyses an N-(acyl)-sphingosylphosphocholine = an N-(acyl)-sphingosyl-1,3-cyclic phosphate + choline. It carries out the reaction an N-(acyl)-sphingosylphosphoethanolamine = an N-(acyl)-sphingosyl-1,3-cyclic phosphate + ethanolamine. It catalyses the reaction a 1-acyl-sn-glycero-3-phosphocholine = a 1-acyl-sn-glycero-2,3-cyclic phosphate + choline. The catalysed reaction is a 1-acyl-sn-glycero-3-phosphoethanolamine = a 1-acyl-sn-glycero-2,3-cyclic phosphate + ethanolamine. Its function is as follows. Dermonecrotic toxins cleave the phosphodiester linkage between the phosphate and headgroup of certain phospholipids (sphingolipid and lysolipid substrates), forming an alcohol (often choline) and a cyclic phosphate. This toxin acts on sphingomyelin (SM). It may also act on ceramide phosphoethanolamine (CPE), lysophosphatidylcholine (LPC) and lysophosphatidylethanolamine (LPE), but not on lysophosphatidylserine (LPS), and lysophosphatidylglycerol (LPG). It acts by transphosphatidylation, releasing exclusively cyclic phosphate products as second products. Induces dermonecrosis, hemolysis, increased vascular permeability, edema, inflammatory response, and platelet aggregation. In Loxosceles variegata (Recluse spider), this protein is Dermonecrotic toxin LvSicTox-alphaIC1bii.